Reading from the N-terminus, the 432-residue chain is FAD-dependent monooxygenase pynG (432 aa).

Positions 32, 103, 315, and 328 each coordinate FAD.

Belongs to the paxM FAD-dependent monooxygenase family. Requires FAD as cofactor.

The protein operates within secondary metabolite biosynthesis. Functionally, FAD-dependent monooxygenase; part of the gene cluster that mediates the biosynthesis of pyranonigrins, a family of antioxidative compounds. The first step of pyranonigrins biosynthesis is performed by the hybrid PKS-NRPS synthetase that condenses 6 malonyl-CoA units to an acetyl starter unit, to form a 1,3,5-trioxotetradecane-6,8-dienyl-ACP. The enoyl reductase (ER) domain of pynA is likely to be functional during the first two rounds of polyketide chain extension, to generate the saturated C-C bonds of the alkyl side chain. PynA subsequently forms the amide bond between the acyl chain and L-serine. Although pynA has a terminal reductase domain, it appears to require the thioesterase pynI for the release of the straight-chain intermediate from pynA via the formation of a tetramic acid pyranonigrin J. The methyltransferase pynC then coverts pyranonigrin J to pyranonigrin I via N-methylation. The FAD-dependent monooxygenase pynG catalyzes an epoxidation-mediated cyclization to form the dihydro-gamma-pyrone moiety, followed by pynD-catalyzed oxidation of the alcohol to the ketone and enolization to yield the characteristic tetramic acid-fused gamma-pyrone core of pyranonigrin H. Pyranonigrin H is substrate of pynH for dehydration-mediated exo-methylene formation from the serine side chain to produce pyranonigrin E, before the oxidase pynE reduces the exo-methylene of pyranonigrin E into a pendant methyl to form pyranonigrin G. The FAD-linked oxidoreductase pynB performs the reverse reaction and converts pyranonigrin G back to pyranonigrin E. The polypeptide is FAD-dependent monooxygenase pynG (Aspergillus niger (strain ATCC MYA-4892 / CBS 513.88 / FGSC A1513)).